The sequence spans 570 residues: Berberine bridge enzyme-like 19 (570 aa).

A signal peptide spans 1-30 (MLTTPPRTFVSVPFFFFFLLFLSLPLSSFS). A disulfide bridge links cysteine 42 with cysteine 105. Residue asparagine 80 is glycosylated (N-linked (GlcNAc...) asparagine). The region spanning 83-257 (STLKPTIIIT…LGYKVKLVPV (175 aa)) is the FAD-binding PCMH-type domain. Positions 120-182 (HDYDGLSYIS…RVHGFPAGVC (63 aa)) form a cross-link, 6-(S-cysteinyl)-8alpha-(pros-histidyl)-FAD (His-Cys). Residues asparagine 341 and asparagine 359 are each glycosylated (N-linked (GlcNAc...) asparagine).

It belongs to the oxygen-dependent FAD-linked oxidoreductase family. It depends on FAD as a cofactor. Post-translationally, the FAD cofactor is bound via a bicovalent 6-S-cysteinyl, 8alpha-N1-histidyl FAD linkage.

The protein resides in the secreted. It is found in the cell wall. This Arabidopsis thaliana (Mouse-ear cress) protein is Berberine bridge enzyme-like 19.